The chain runs to 259 residues: Adenosylcobinamide-GDP ribazoletransferase (259 aa).

6 helical membrane-spanning segments follow: residues 37–57 (ASRY…LVYS), 58–78 (VMLH…ASVL), 118–138 (ALAL…LALF), 143–163 (VSLA…SFIF), 195–215 (AAIS…LGLL), and 237–257 (LGAT…IVGA).

Belongs to the CobS family. Mg(2+) is required as a cofactor.

It localises to the cell inner membrane. The enzyme catalyses alpha-ribazole + adenosylcob(III)inamide-GDP = adenosylcob(III)alamin + GMP + H(+). It catalyses the reaction alpha-ribazole 5'-phosphate + adenosylcob(III)inamide-GDP = adenosylcob(III)alamin 5'-phosphate + GMP + H(+). It participates in cofactor biosynthesis; adenosylcobalamin biosynthesis; adenosylcobalamin from cob(II)yrinate a,c-diamide: step 7/7. Its function is as follows. Joins adenosylcobinamide-GDP and alpha-ribazole to generate adenosylcobalamin (Ado-cobalamin). Also synthesizes adenosylcobalamin 5'-phosphate from adenosylcobinamide-GDP and alpha-ribazole 5'-phosphate. The sequence is that of Adenosylcobinamide-GDP ribazoletransferase from Shewanella piezotolerans (strain WP3 / JCM 13877).